We begin with the raw amino-acid sequence, 127 residues long: Glycine cleavage system H protein (127 aa).

Residues 23–104 enclose the Lipoyl-binding domain; sequence TALVGLTDYA…PYEAWFAKIT (82 aa). At Lys64 the chain carries N6-lipoyllysine.

It belongs to the GcvH family. In terms of assembly, the glycine cleavage system is composed of four proteins: P, T, L and H. It depends on (R)-lipoate as a cofactor.

Functionally, the glycine cleavage system catalyzes the degradation of glycine. The H protein shuttles the methylamine group of glycine from the P protein to the T protein. The polypeptide is Glycine cleavage system H protein (Lachnoclostridium phytofermentans (strain ATCC 700394 / DSM 18823 / ISDg) (Clostridium phytofermentans)).